Consider the following 230-residue polypeptide: Large ribosomal subunit protein uL1 (230 aa).

Belongs to the universal ribosomal protein uL1 family. As to quaternary structure, part of the 50S ribosomal subunit.

In terms of biological role, binds directly to 23S rRNA. The L1 stalk is quite mobile in the ribosome, and is involved in E site tRNA release. Protein L1 is also a translational repressor protein, it controls the translation of the L11 operon by binding to its mRNA. This Lactobacillus johnsonii (strain CNCM I-12250 / La1 / NCC 533) protein is Large ribosomal subunit protein uL1.